The following is a 1399-amino-acid chain: MKDLLNLLKNQGQIEEFDAIRIGLASPEMIRSWSFGEVKKPETINYRTFKPERDGLFCAKIFGPVKDYECLCGKYKRLKHRGVICEKCGVEVALAKVRRERMGHIELASPVAHIWFLKSLPSRIGLLLDMTLRDIERVLYFESYVVIDPGMTTLEKGQLLNDEQYFEALEEFGDDFDARMGAEAVHELLNAIDLEHEIGRLREEIPQTNSETKIKKLSKRLKLMEAFQGSGNKPEWMVLTVLPVLPPDLRPLVPLDGGRFATSDLNDLYRRVINRNNRLKRLLDLAAPDIIVRNEKRMLQEAVDALLDNGRRGRAITGSNKRPLKSLADMIKGKQGRFRQNLLGKRVDYSGRSVITVGPTLRLHQCGLPKKMALELFKPFIFGKLEGRGMATTIKAAKKMVERELPEVWDVLAEVIREHPVLLNRAPTLHRLGIQAFEPVLIEGKAIQLHPLVCAAYNADFDGDQMAVHVPLTLEAQLEARALMMSTNNILSPANGEPIIVPSQDVVMGLYYMTREAINAKGEGMAFADLQEVDRAYRSGQASLHARVKVRINEKVKGEDGQLTANTRIVDTTVGRALLFQVVPAGLPFDVVNQSMKKKAISKLINHCYRVVGLKDTVIFADQLMYTGFAYSTISGVSIGVNDFVIPDEKARIINAATDEVKEIESQYASGLVTQGEKYNKVIDLWSKANDEVSKAMMANLSKEKVVDREGKEVDQESFNSMYMMADSGARGSAAQIRQLAGMRGLMAKPDGSIIETPITANFREGLNVLQYFISTHGARKGLADTALKTANSGYLTRRLVDVAQDLVVTEIDCGTEHGLLMSPHIEGGDVVEPLGERVLGRVIARDVFKPGSDEVIVPAGTLIDEKWVDFLEVMSVDEVVVRSPITCETRHGICAMCYGRDLARGHRVNIGEAVGVIAAQSIGEPGTQLTMRTFHIGGAASRTSAADNVQVKNGGTIRLHNLKHVVRADGALVAVSRSGELAVADDFGRERERYKLPYGAVISVKEGDKVDPGAIVAKWDPHTHPIVTEVDGTVAFVGMEEGITVKRQTDELTGLTNIEVMDPKDRPAAGKDIRPAVKLIDAAGKDLLLPGTDVPAQYFLPANALVNLTDGAKVSIGDVVARIPQETSKTRDITGGLPRVADLFEARRPKEPSILAEISGTISFGKETKGKRRLVITPNDGSDPYEELIPKWRHLNVFEGEQVNRGEVISDGPSNPHDILRLLGVSSLAKYIVNEIQDVYRLQGVKINDKHIETILRQMLRKVEVSESGDSSFIKGDQVELTQVLEENEQLGTEDKFPAKYERVLLGITKASLSTESFISAASFQETTRVLTEAAVTGKRDFLRGLKENVVVGRLIPAGTGLAYHSERKRQRDLGKPQRVSASEAEAALTEALNSSGN.

Residues cysteine 70, cysteine 72, cysteine 85, and cysteine 88 each contribute to the Zn(2+) site. Mg(2+) contacts are provided by aspartate 460, aspartate 462, and aspartate 464. Zn(2+) is bound by residues cysteine 814, cysteine 888, cysteine 895, and cysteine 898. Positions 1367-1399 (SERKRQRDLGKPQRVSASEAEAALTEALNSSGN) are disordered. Over residues 1382-1399 (SASEAEAALTEALNSSGN) the composition is skewed to low complexity.

The protein belongs to the RNA polymerase beta' chain family. As to quaternary structure, the RNAP catalytic core consists of 2 alpha, 1 beta, 1 beta' and 1 omega subunit. When a sigma factor is associated with the core the holoenzyme is formed, which can initiate transcription. Mg(2+) is required as a cofactor. Zn(2+) serves as cofactor.

The catalysed reaction is RNA(n) + a ribonucleoside 5'-triphosphate = RNA(n+1) + diphosphate. Its function is as follows. DNA-dependent RNA polymerase catalyzes the transcription of DNA into RNA using the four ribonucleoside triphosphates as substrates. The sequence is that of DNA-directed RNA polymerase subunit beta' from Pseudomonas paraeruginosa (strain DSM 24068 / PA7) (Pseudomonas aeruginosa (strain PA7)).